The sequence spans 402 residues: S-adenosylmethionine synthase (402 aa).

Histidine 17 serves as a coordination point for ATP. Aspartate 19 is a Mg(2+) binding site. Glutamate 45 serves as a coordination point for K(+). Residues glutamate 58 and glutamine 101 each coordinate L-methionine. Positions glutamine 101–glutamate 111 are flexible loop. ATP is bound by residues aspartate 177–lysine 179, arginine 244–phenylalanine 245, aspartate 253, arginine 259–lysine 260, alanine 276, and lysine 280. Aspartate 253 contacts L-methionine. Lysine 284 contacts L-methionine.

This sequence belongs to the AdoMet synthase family. In terms of assembly, homotetramer; dimer of dimers. The cofactor is Mg(2+). Requires K(+) as cofactor.

The protein localises to the cytoplasm. It carries out the reaction L-methionine + ATP + H2O = S-adenosyl-L-methionine + phosphate + diphosphate. It participates in amino-acid biosynthesis; S-adenosyl-L-methionine biosynthesis; S-adenosyl-L-methionine from L-methionine: step 1/1. Its function is as follows. Catalyzes the formation of S-adenosylmethionine (AdoMet) from methionine and ATP. The overall synthetic reaction is composed of two sequential steps, AdoMet formation and the subsequent tripolyphosphate hydrolysis which occurs prior to release of AdoMet from the enzyme. This is S-adenosylmethionine synthase from Lactobacillus johnsonii (strain CNCM I-12250 / La1 / NCC 533).